The chain runs to 124 residues: Ribonuclease pancreatic (124 aa).

The disordered stretch occupies residues lysine 1–asparagine 24. Substrate contacts are provided by lysine 7 and arginine 10. Histidine 12 serves as the catalytic Proton acceptor. 4 disulfides stabilise this stretch: cysteine 26-cysteine 84, cysteine 40-cysteine 95, cysteine 58-cysteine 110, and cysteine 65-cysteine 72. N-linked (GlcNAc...) asparagine; in river-breed only glycosylation occurs at asparagine 34. Residues lysine 41–threonine 45, lysine 66, and arginine 85 contribute to the substrate site. Residue histidine 119 is the Proton donor of the active site.

It belongs to the pancreatic ribonuclease family. As to quaternary structure, monomer. Interacts with and forms tight 1:1 complexes with RNH1. Dimerization of two such complexes may occur. Interaction with RNH1 inhibits this protein. Swamp breed ribonuclease do not bind carbohydrate, but there is evidence of a polymorphic form that does. Pancreas.

The protein resides in the secreted. The enzyme catalyses an [RNA] containing cytidine + H2O = an [RNA]-3'-cytidine-3'-phosphate + a 5'-hydroxy-ribonucleotide-3'-[RNA].. The catalysed reaction is an [RNA] containing uridine + H2O = an [RNA]-3'-uridine-3'-phosphate + a 5'-hydroxy-ribonucleotide-3'-[RNA].. Functionally, endonuclease that catalyzes the cleavage of RNA on the 3' side of pyrimidine nucleotides. Acts on single-stranded and double-stranded RNA. In Bubalus bubalis (Domestic water buffalo), this protein is Ribonuclease pancreatic (RNASE1).